Consider the following 245-residue polypeptide: Dehydrogenase/reductase SDR family member 6 (245 aa).

Residues Gln-16 to Ile-18, Asp-37, and Asp-58 each bind NAD(+). Residue Arg-144 coordinates substrate. Tyr-147 acts as the Proton acceptor in catalysis. NAD(+) is bound by residues Lys-151 and Val-180–Ser-184. Residues Arg-188 and Arg-205 each contribute to the substrate site.

Belongs to the short-chain dehydrogenases/reductases (SDR) family. In terms of assembly, homotetramer. Detected in liver, spleen and macrophages. Widely expressed.

It is found in the cytoplasm. It carries out the reaction cis-4-hydroxy-L-proline + NAD(+) = 4-oxo-L-proline + NADH + H(+). The enzyme catalyses (R)-3-hydroxybutanoate + NAD(+) = acetoacetate + NADH + H(+). Its pathway is amino-acid metabolism. The protein operates within siderophore biosynthesis. NAD(H)-dependent dehydrogenase/reductase with a preference for cyclic substrates. Catalyzes stereoselective conversion of 4-oxo-L-proline to cis-4-hydroxy-L-proline, likely a detoxification mechanism for ketoprolines. Mediates the formation of 2,5-dihydroxybenzoate (2,5-DHBA), a siderophore that chelates free cytoplasmic iron and associates with LCN2, thereby regulating iron transport and homeostasis while protecting cells against free radical-induced oxidative stress. The iron-siderophore complex is imported into mitochondria, providing an iron source for mitochondrial metabolic processes in particular heme synthesis. May act as a 3-hydroxybutyrate dehydrogenase. Its function is as follows. (Microbial infection) May play a role in susceptibility to bacterial infection by providing an assimilable source of iron that is exploited by pathogenic bacteria. Host iron-siderophore complexes can be used by bacteria to promote their own growth and pathogenicity. This chain is Dehydrogenase/reductase SDR family member 6, found in Mus musculus (Mouse).